Consider the following 317-residue polypeptide: Adenosine receptor A3 (317 aa).

Over 1–14 (MPVNSTAVSWTSVT) the chain is Extracellular. Asn4 carries N-linked (GlcNAc...) asparagine glycosylation. Residues 15–37 (YITVEILIGLCAIVGNVLVIWVV) traverse the membrane as a helical segment. Residues 38 to 48 (KLNPSLQTTTF) lie on the Cytoplasmic side of the membrane. Residues 49–72 (YFIVSLALADIAVGVLVMPLAIVI) traverse the membrane as a helical segment. Residues 73-84 (SLGVTIHFYSCL) lie on the Extracellular side of the membrane. Cys83 and Cys165 are disulfide-bonded. The helical transmembrane segment at 85 to 106 (FMTCLMLIFTHASIMSLLAIAV) threads the bilayer. Topologically, residues 107-126 (DRYLRVKLTVRYRRVTTQRR) are cytoplasmic. The chain crosses the membrane as a helical span at residues 127–148 (IWLALGLCWLVSFLVGLTPMFG). The Extracellular portion of the chain corresponds to 149–176 (WNMKLSSADENLTFLPCRFRSVMRMDYM). N-linked (GlcNAc...) asparagine glycosylation occurs at Asn159. The helical transmembrane segment at 177–197 (VYFSFFLWILVPLVVMCAIYF) threads the bilayer. Over 198–230 (DIFYIIRNRLSQSFSGSRETGAFYGREFKTAKS) the chain is Cytoplasmic. Residues 231–254 (LLLVLFLFALCWLPLSIINCILYF) traverse the membrane as a helical segment. Topologically, residues 255–260 (DGQVPQ) are extracellular. The helical transmembrane segment at 261-283 (TVLYLGILLSHANSMMNPIVYAY) threads the bilayer. Residues 284–317 (KIKKFKETYLLILKACVMCQPSKSMDPSTEQTSE) lie on the Cytoplasmic side of the membrane. Cys302 carries S-palmitoyl cysteine lipidation.

This sequence belongs to the G-protein coupled receptor 1 family. Phosphorylation on Thr-315 and Ser-316 may be crucial for rapid desensitization. Phosphorylation on Thr-315 may be necessary for phosphorylation on Ser-316 to occur. As to expression, most abundant in lung, spleen and pineal gland. Moderate expression in brain, kidney and testis.

The protein resides in the cell membrane. Its function is as follows. Receptor for adenosine. The activity of this receptor is mediated by G proteins which inhibits adenylyl cyclase. This is Adenosine receptor A3 (ADORA3) from Ovis aries (Sheep).